Consider the following 111-residue polypeptide: Phosphoribosyl-ATP pyrophosphatase (111 aa).

This sequence belongs to the PRA-PH family.

Its subcellular location is the cytoplasm. It carries out the reaction 1-(5-phospho-beta-D-ribosyl)-ATP + H2O = 1-(5-phospho-beta-D-ribosyl)-5'-AMP + diphosphate + H(+). It functions in the pathway amino-acid biosynthesis; L-histidine biosynthesis; L-histidine from 5-phospho-alpha-D-ribose 1-diphosphate: step 2/9. In Alcanivorax borkumensis (strain ATCC 700651 / DSM 11573 / NCIMB 13689 / SK2), this protein is Phosphoribosyl-ATP pyrophosphatase.